Consider the following 511-residue polypeptide: Inactive cytochrome P450 monooxygenase cloA (511 aa).

The chain crosses the membrane as a helical span at residues 17–37 (ILLTAGLCVPCALVIHGIYNL). 2 N-linked (GlcNAc...) asparagine glycosylation sites follow: N81 and N344. C450 serves as a coordination point for heme.

The protein belongs to the cytochrome P450 family. Heme is required as a cofactor.

It localises to the membrane. Functionally, inactive cytochrome P450 monooxygenase; part of the gene cluster that mediates the biosynthesis of fungal ergot alkaloid. DmaW catalyzes the first step of ergot alkaloid biosynthesis by condensing dimethylallyl diphosphate (DMAP) and tryptophan to form 4-dimethylallyl-L-tryptophan. The second step is catalyzed by the methyltransferase easF that methylates 4-dimethylallyl-L-tryptophan in the presence of S-adenosyl-L-methionine, resulting in the formation of 4-dimethylallyl-L-abrine. The catalase easC and the FAD-dependent oxidoreductase easE then transform 4-dimethylallyl-L-abrine to chanoclavine-I which is further oxidized by easD in the presence of NAD(+), resulting in the formation of chanoclavine-I aldehyde. Agroclavine dehydrogenase easG then mediates the conversion of chanoclavine-I aldehyde to agroclavine via a non-enzymatic adduct reaction: the substrate is an iminium intermediate that is formed spontaneously from chanoclavine-I aldehyde in the presence of glutathione. Further conversion of agroclavine to paspalic acid is a two-step process involving oxidation of agroclavine to elymoclavine and of elymoclavine to paspalic acid, the second step being performed by the elymoclavine oxidase cloA. However, cloA does not encode a functional enzyme indicating that C.fusiformis terminates its ergot alkaloid pathway at elymoclavine. This is Inactive cytochrome P450 monooxygenase cloA from Claviceps fusiformis (Ergot fungus).